Reading from the N-terminus, the 543-residue chain is Hydroxylamine reductase (543 aa).

Cysteine 5, cysteine 8, cysteine 17, and cysteine 23 together coordinate [4Fe-4S] cluster. Positions 236, 260, 304, 398, 426, 451, 486, and 488 each coordinate hybrid [4Fe-2O-2S] cluster. Cysteine 398 is modified (cysteine persulfide).

This sequence belongs to the HCP family. The cofactor is [4Fe-4S] cluster. Hybrid [4Fe-2O-2S] cluster is required as a cofactor.

It is found in the cytoplasm. The catalysed reaction is A + NH4(+) + H2O = hydroxylamine + AH2 + H(+). Functionally, catalyzes the reduction of hydroxylamine to form NH(3) and H(2)O. In Bacteroides thetaiotaomicron (strain ATCC 29148 / DSM 2079 / JCM 5827 / CCUG 10774 / NCTC 10582 / VPI-5482 / E50), this protein is Hydroxylamine reductase.